The sequence spans 304 residues: Recombination-associated protein RdgC (304 aa).

The protein belongs to the RdgC family.

The protein resides in the cytoplasm. Its subcellular location is the nucleoid. Its function is as follows. May be involved in recombination. The chain is Recombination-associated protein RdgC from Shewanella sp. (strain ANA-3).